The primary structure comprises 506 residues: ATP synthase subunit alpha (506 aa).

Residue 170–177 (GDRQTGKT) coordinates ATP.

Belongs to the ATPase alpha/beta chains family. In terms of assembly, F-type ATPases have 2 components, CF(1) - the catalytic core - and CF(0) - the membrane proton channel. CF(1) has five subunits: alpha(3), beta(3), gamma(1), delta(1), epsilon(1). CF(0) has four main subunits: a(1), b(1), b'(1) and c(9-12).

The protein resides in the cellular thylakoid membrane. The catalysed reaction is ATP + H2O + 4 H(+)(in) = ADP + phosphate + 5 H(+)(out). Its function is as follows. Produces ATP from ADP in the presence of a proton gradient across the membrane. The alpha chain is a regulatory subunit. The chain is ATP synthase subunit alpha from Synechococcus sp. (strain WH7803).